A 184-amino-acid polypeptide reads, in one-letter code: Photosystem I assembly protein Ycf4 (184 aa).

Transmembrane regions (helical) follow at residues 19–39 and 57–77; these read ISNF…LLVG and IIFF…LFIS.

Belongs to the Ycf4 family.

The protein localises to the plastid. It is found in the chloroplast thylakoid membrane. Seems to be required for the assembly of the photosystem I complex. This Cucumis sativus (Cucumber) protein is Photosystem I assembly protein Ycf4.